The sequence spans 106 residues: Large ribosomal subunit protein uL23 (106 aa).

It belongs to the universal ribosomal protein uL23 family. In terms of assembly, part of the 50S ribosomal subunit. Contacts protein L29, and trigger factor when it is bound to the ribosome.

One of the early assembly proteins it binds 23S rRNA. One of the proteins that surrounds the polypeptide exit tunnel on the outside of the ribosome. Forms the main docking site for trigger factor binding to the ribosome. The chain is Large ribosomal subunit protein uL23 from Acinetobacter baumannii (strain SDF).